Reading from the N-terminus, the 249-residue chain is Putative S-adenosyl-L-methionine-dependent methyltransferase Mkms_0592 (249 aa).

Residues aspartate 111 and 141 to 142 contribute to the S-adenosyl-L-methionine site; that span reads DL.

This sequence belongs to the UPF0677 family.

Functionally, exhibits S-adenosyl-L-methionine-dependent methyltransferase activity. The chain is Putative S-adenosyl-L-methionine-dependent methyltransferase Mkms_0592 from Mycobacterium sp. (strain KMS).